The chain runs to 179 residues: Probable chemoreceptor glutamine deamidase CheD 2 (179 aa).

This sequence belongs to the CheD family.

It carries out the reaction L-glutaminyl-[protein] + H2O = L-glutamyl-[protein] + NH4(+). Its function is as follows. Probably deamidates glutamine residues to glutamate on methyl-accepting chemotaxis receptors (MCPs), playing an important role in chemotaxis. This Ruegeria sp. (strain TM1040) (Silicibacter sp.) protein is Probable chemoreceptor glutamine deamidase CheD 2.